A 183-amino-acid polypeptide reads, in one-letter code: Translation initiation factor IF-3 (183 aa).

This sequence belongs to the IF-3 family. Monomer.

It localises to the cytoplasm. Functionally, IF-3 binds to the 30S ribosomal subunit and shifts the equilibrium between 70S ribosomes and their 50S and 30S subunits in favor of the free subunits, thus enhancing the availability of 30S subunits on which protein synthesis initiation begins. The sequence is that of Translation initiation factor IF-3 from Pseudomonas syringae pv. tomato (strain ATCC BAA-871 / DC3000).